A 524-amino-acid polypeptide reads, in one-letter code: Zinc finger CCCH domain-containing protein 37 (524 aa).

Residues 19–39 (ASTVSPAPPPPQQPLPPKTGL) are disordered. The span at 24 to 35 (PAPPPPQQPLPP) shows a compositional bias: pro residues. C3H1-type zinc fingers lie at residues 174 to 202 (RAGE…HPIW), 225 to 253 (RPGE…HPRE), and 268 to 296 (RPSE…HPKD). The disordered stretch occupies residues 300–319 (PSSSQDIGSSVGLTSEPDAT). C3H1-type zinc fingers lie at residues 340-368 (RSGE…HPER), 420-448 (RPGQ…HPAD), and 473-501 (REGA…HPPP). The disordered stretch occupies residues 505–524 (MAKTTSEADAAGATNTDTTQ). The span at 512–524 (ADAAGATNTDTTQ) shows a compositional bias: low complexity.

Interacts with HEN4. Interacts with FLK and PEP. In terms of tissue distribution, highly expressed in inflorescences, at intermediate levels in leaves and stems and at lower levels in roots.

It is found in the nucleus speckle. Its function is as follows. Involved in flower development. Functions in floral reproductive organ identity by binding AGAMOUS (AG) pre-mRNA and promoting its processing. Functions in association with HUA2 and HEN4. In Arabidopsis thaliana (Mouse-ear cress), this protein is Zinc finger CCCH domain-containing protein 37 (HUA1).